Here is a 370-residue protein sequence, read N- to C-terminus: tRNA-specific 2-thiouridylase MnmA (370 aa).

ATP contacts are provided by residues 12 to 19 (GMSGGVDS) and leucine 38. The active-site Nucleophile is the cysteine 105. Cysteine 105 and cysteine 204 are joined by a disulfide. Glycine 129 is a binding site for ATP. The segment at 153-155 (KDQ) is interaction with tRNA. The Cysteine persulfide intermediate role is filled by cysteine 204. The tract at residues 310–311 (RY) is interaction with tRNA.

Belongs to the MnmA/TRMU family.

The protein localises to the cytoplasm. It carries out the reaction S-sulfanyl-L-cysteinyl-[protein] + uridine(34) in tRNA + AH2 + ATP = 2-thiouridine(34) in tRNA + L-cysteinyl-[protein] + A + AMP + diphosphate + H(+). In terms of biological role, catalyzes the 2-thiolation of uridine at the wobble position (U34) of tRNA, leading to the formation of s(2)U34. This is tRNA-specific 2-thiouridylase MnmA from Desulfitobacterium hafniense (strain Y51).